A 245-amino-acid chain; its full sequence is 1-(5-phosphoribosyl)-5-[(5-phosphoribosylamino)methylideneamino] imidazole-4-carboxamide isomerase (245 aa).

D7 (proton acceptor) is an active-site residue. D129 (proton donor) is an active-site residue.

This sequence belongs to the HisA/HisF family.

It is found in the cytoplasm. It catalyses the reaction 1-(5-phospho-beta-D-ribosyl)-5-[(5-phospho-beta-D-ribosylamino)methylideneamino]imidazole-4-carboxamide = 5-[(5-phospho-1-deoxy-D-ribulos-1-ylimino)methylamino]-1-(5-phospho-beta-D-ribosyl)imidazole-4-carboxamide. It functions in the pathway amino-acid biosynthesis; L-histidine biosynthesis; L-histidine from 5-phospho-alpha-D-ribose 1-diphosphate: step 4/9. The polypeptide is 1-(5-phosphoribosyl)-5-[(5-phosphoribosylamino)methylideneamino] imidazole-4-carboxamide isomerase (Pectobacterium atrosepticum (strain SCRI 1043 / ATCC BAA-672) (Erwinia carotovora subsp. atroseptica)).